We begin with the raw amino-acid sequence, 307 residues long: Streptomycin 6-kinase (307 aa).

133 to 145 (LAGLLNRLHSVPA) lines the streptomycin pocket. The active-site Proton acceptor is the D201.

Belongs to the aminoglycoside phosphotransferase family.

The enzyme catalyses streptomycin + ATP = streptomycin 6-phosphate + ADP + H(+). Its function is as follows. The aminoglycoside phosphotransferases achieve inactivation of their antibiotic substrates by phosphorylation. In Streptomyces griseus, this protein is Streptomycin 6-kinase (aphD).